The primary structure comprises 341 residues: Methionine import ATP-binding protein MetN (341 aa).

Residues 2–237 (IELCGLKKSF…PESLARKMLY (236 aa)) enclose the ABC transporter domain. 34–41 (GKSGAGKS) is an ATP binding site.

The protein belongs to the ABC transporter superfamily. Methionine importer (TC 3.A.1.24) family. As to quaternary structure, the complex is composed of two ATP-binding proteins (MetN), two transmembrane proteins (MetI) and a solute-binding protein (MetQ).

It localises to the cell inner membrane. The catalysed reaction is L-methionine(out) + ATP + H2O = L-methionine(in) + ADP + phosphate + H(+). It catalyses the reaction D-methionine(out) + ATP + H2O = D-methionine(in) + ADP + phosphate + H(+). Its function is as follows. Part of the ABC transporter complex MetNIQ involved in methionine import. Responsible for energy coupling to the transport system. In Legionella pneumophila (strain Lens), this protein is Methionine import ATP-binding protein MetN.